A 463-amino-acid polypeptide reads, in one-letter code: L-seryl-tRNA(Sec) selenium transferase (463 aa).

Residue Lys-295 is modified to N6-(pyridoxal phosphate)lysine.

This sequence belongs to the SelA family. Homodecamer; pentamer of dimers. Binds only one seryl-tRNA(Sec) per dimer. It depends on pyridoxal 5'-phosphate as a cofactor.

The protein resides in the cytoplasm. The enzyme catalyses L-seryl-tRNA(Sec) + selenophosphate + H(+) = L-selenocysteinyl-tRNA(Sec) + phosphate. The protein operates within aminoacyl-tRNA biosynthesis; selenocysteinyl-tRNA(Sec) biosynthesis; selenocysteinyl-tRNA(Sec) from L-seryl-tRNA(Sec) (bacterial route): step 1/1. Functionally, converts seryl-tRNA(Sec) to selenocysteinyl-tRNA(Sec) required for selenoprotein biosynthesis. In Escherichia coli O7:K1 (strain IAI39 / ExPEC), this protein is L-seryl-tRNA(Sec) selenium transferase.